We begin with the raw amino-acid sequence, 335 residues long: Fimbrial adhesin PapGIII (335 aa).

Positions 1–21 (MKKWLPAFLFLSLSGCNDALA) are cleaved as a signal peptide.

This sequence belongs to the adhesin PapG family.

It is found in the secreted. It localises to the fimbrium. In terms of biological role, tip adhesin component of type P pili that binds preferentially to Gal-alpha(1-4)-Gal-containing glycolipids such as globoside. This tip is common in E.coli strains that cause human cystitis, but rare in pyelonephritic isolates. The chain is Fimbrial adhesin PapGIII from Escherichia coli.